The sequence spans 355 residues: uncharacterized protein (355 aa).

This sequence belongs to the 3-beta-HSD family.

This is an uncharacterized protein from Frog virus 3 (isolate Goorha) (FV-3).